The following is a 269-amino-acid chain: Intermembrane phospholipid transport system ATP-binding protein MlaF (269 aa).

In terms of domain architecture, ABC transporter spans 9 to 245 (VDMRDVSFTR…PDPRVRQFLD (237 aa)). 41–48 (GPSGIGKT) contributes to the ATP binding site.

This sequence belongs to the ABC transporter superfamily. MlaF family. In terms of assembly, the complex is composed of two ATP-binding proteins (MlaF), two transmembrane proteins (MlaE), two cytoplasmic solute-binding proteins (MlaB) and six periplasmic solute-binding proteins (MlaD).

It is found in the cell inner membrane. Its function is as follows. Part of the ABC transporter complex MlaFEDB, which is involved in a phospholipid transport pathway that maintains lipid asymmetry in the outer membrane by retrograde trafficking of phospholipids from the outer membrane to the inner membrane. Responsible for energy coupling to the transport system. The polypeptide is Intermembrane phospholipid transport system ATP-binding protein MlaF (Escherichia coli O157:H7).